Here is a 386-residue protein sequence, read N- to C-terminus: GLABROUS1 enhancer-binding protein-like 1 (386 aa).

Disordered regions lie at residues 1-58 and 197-314; these read MVTP…KKKK and ESGE…DDDD. Residues 216–226 show a composition bias toward basic and acidic residues; that stretch reads EEIRDNDETAR. Positions 221–285 form a coiled coil; the sequence is NDETARKAQQ…LKEHEEVANT (65 aa). Over residues 257–267 the composition is skewed to polar residues; that stretch reads DNNGTTQIAQQ. The span at 291–300 shows a compositional bias: low complexity; it reads NGAAKTTENG. Residues 354-375 are non-canonical leucine-zipper; sequence LSDEWKALCVEERRLNIKKLRF.

This sequence belongs to the GeBP family. As to quaternary structure, homo- and heterodimers. Interacts with GEBP, GPL2 and GPL3. Interacts with GEBP. Expressed in the apical meristem and young leaf primordia. Detected in the vascular tissues of cotyledons and leaves, in hydathodes and at the base of flowers and siliques, but not in roots.

It is found in the nucleus. Functionally, probable transcription factor. May play redundant roles with GEBP and GPL2 in cytokinin responses by regulating the transcript levels of type-A ARR response genes. Involved in stress responses. Plays a repressive role in cell expansion by counteracting the positive role of CPR5 in this process, but does not regulate cell proliferation or endoreduplication. The polypeptide is GLABROUS1 enhancer-binding protein-like 1 (Arabidopsis thaliana (Mouse-ear cress)).